The sequence spans 179 residues: MILLPDENWRWVFDEQRQSLLLDLSDDMQFVVSVPPKQLAQKQAFTEHFSLDDSSLYFHFLECLGEFPFTDPERVQIVLNAVAAVKYTRPLVSQSWYYRDVDMLSGEPELGEVFSVVTEFTYGDVMIISPGSNASLCIVISQAIQLDADKSLRQSSVCKLMNSKLLPYQAATQYLSKMA.

Belongs to the ZapC family. In terms of assembly, interacts directly with FtsZ.

It localises to the cytoplasm. In terms of biological role, contributes to the efficiency of the cell division process by stabilizing the polymeric form of the cell division protein FtsZ. Acts by promoting interactions between FtsZ protofilaments and suppressing the GTPase activity of FtsZ. This Tolumonas auensis (strain DSM 9187 / NBRC 110442 / TA 4) protein is Cell division protein ZapC.